The chain runs to 104 residues: Large ribosomal subunit protein uL24 (104 aa).

The protein belongs to the universal ribosomal protein uL24 family. Part of the 50S ribosomal subunit.

Its function is as follows. One of two assembly initiator proteins, it binds directly to the 5'-end of the 23S rRNA, where it nucleates assembly of the 50S subunit. Functionally, one of the proteins that surrounds the polypeptide exit tunnel on the outside of the subunit. The sequence is that of Large ribosomal subunit protein uL24 from Clostridium beijerinckii (strain ATCC 51743 / NCIMB 8052) (Clostridium acetobutylicum).